We begin with the raw amino-acid sequence, 214 residues long: MQLFHLCLIISCTCPTVQASKLCLGWLWGMDIDPYKEFGATVELLSFLPSDFFPSVRDLLDTASALYREALESPEHCSPHHTALRQAILCWVELMTLATWVGNNLQDPASRDLVVNYVNTNMGLKIRQLLWFHISCLTFGRETVLEYLVSFGVWIRTPPAYRPPNAPILSTLPETTVVRRRDRGRSPRRRTPSPRRRRSQSPRRRRSQSRESQC.

The first 19 residues, 1 to 19, serve as a signal peptide directing secretion; that stretch reads MQLFHLCLIISCTCPTVQA. An HBEAG region spans residues 25–27; the sequence is GWL. A disordered region spans residues 165-214; it reads NAPILSTLPETTVVRRRDRGRSPRRRTPSPRRRRSQSPRRRRSQSRESQC. Positions 178 to 207 are enriched in basic residues; it reads VRRRDRGRSPRRRTPSPRRRRSQSPRRRRS. Residues 186–192 form a 1; half-length repeat; the sequence is SPRRRTP. Residues 186-208 are 3 X 8 AA repeats of S-P-R-R-R-R-S-Q; that stretch reads SPRRRTPSPRRRRSQSPRRRRSQ. Positions 186 to 214 are excised as a propeptide; that stretch reads SPRRRTPSPRRRRSQSPRRRRSQSRESQC. 2 consecutive repeat copies span residues 193–200 and 201–208.

Belongs to the orthohepadnavirus precore antigen family. Homodimerizes. Post-translationally, phosphorylated. In terms of processing, cleaved by host furin.

It is found in the secreted. It localises to the host nucleus. May regulate immune response to the intracellular capsid in acting as a T-cell tolerogen, by having an immunoregulatory effect which prevents destruction of infected cells by cytotoxic T-cells. This immune regulation may predispose to chronicity during perinatal infections and prevent severe liver injury during adult infections. The protein is External core antigen of Hepatitis B virus genotype A2 (isolate Japan/11D11HCCW/1998) (HBV-A).